A 92-amino-acid chain; its full sequence is MICAVYKSGRRADTYLFVKKRDVFDDVPEPLMEMFGSKTLVMIVPLSKRDHLGIADIDKVKVALVEQGYYLQIPPPQINLLEQHKQELAFKK.

The 85-residue stretch at Met1–Lys85 folds into the YcgL domain.

The protein is YcgL domain-containing protein Sfri_1738 of Shewanella frigidimarina (strain NCIMB 400).